Here is a 737-residue protein sequence, read N- to C-terminus: Zinc finger protein 184 (737 aa).

The KRAB domain maps to 28 to 99 (VTFKDVVVNF…DSCIPVGPLE (72 aa)). Serine 117 is modified (phosphoserine). Residue lysine 185 forms a Glycyl lysine isopeptide (Lys-Gly) (interchain with G-Cter in SUMO2) linkage. 17 consecutive C2H2-type zinc fingers follow at residues 201 to 223 (CKCNECGKAFTYCSALIRHQRTH), 229 to 251 (YKCNECNKAFSRSENLINHQRIH), 257 to 279 (YKCDQCGKGFIEGPSLTQHQRIH), 285 to 307 (YKCDECGKAFSQRTHLVQHQRIH), 313 to 335 (YTCTECGKSFSQRGHFMEHQKIH), 341 to 363 (FKCEECEKTFTRSTHLTQHQKIH), 369 to 391 (YKCNECGKAFNGPSTFIRHHMIH), 397 to 419 (YECNECGKAFSQHSNLTQHQKTH), 425 to 447 (YDCAECGKAFSYWSSLAQHLKIH), 453 to 475 (YKCSDCGKAFSYCSSLTQHRRIH), 481 to 503 (FECSECGKAFSYLSNLNQHQKTH), 509 to 531 (YECKECGKAFIRSSSLAKHERIH), 537 to 559 (YQCHECGKTFSYGSSLIQHKKIH), 565 to 587 (YKCNECGRAFNQKIHLTQHKRIH), 593 to 615 (YACPKCGKTFRHCSSLAQHQKTH), 621 to 643 (YQCNKCEKTFSQNSRLTQHQRIH), and 649 to 671 (YKCSECDKCFTGSVHLTEHRSTH). Residues 677–698 (YNSECPQTFSQSTYLTQHQKIH) form a C2H2-type 18; degenerate zinc finger. A C2H2-type 19 zinc finger spans residues 704-726 (LGCEDCEKAFQCHSALTKHQRLH).

Belongs to the krueppel C2H2-type zinc-finger protein family.

Its subcellular location is the nucleus. Its function is as follows. May be involved in transcriptional regulation. The chain is Zinc finger protein 184 (Zfp184) from Mus musculus (Mouse).